The following is a 234-amino-acid chain: Probable Ufm1-specific protease 1 (234 aa).

Residues cysteine 70, aspartate 194, and histidine 196 contribute to the active site.

The protein belongs to the peptidase C78 family.

Its function is as follows. Thiol protease which recognizes and hydrolyzes the peptide bond at the C-terminal Gly of UFM1, a ubiquitin-like modifier protein bound to a number of target proteins. The protein is Probable Ufm1-specific protease 1 of Drosophila melanogaster (Fruit fly).